A 720-amino-acid polypeptide reads, in one-letter code: ABC transporter G family member STR2 (720 aa).

At 1-467 (MRHANGRRGD…NFINIRRTPE (467 aa)) the chain is on the cytoplasmic side. The 250-residue stretch at 25–274 (LEFSNLTYTV…LGRMGRKVPK (250 aa)) folds into the ABC transporter domain. 70 to 77 (GPSGAGKS) provides a ligand contact to ATP. A disordered region spans residues 313–346 (GAHEMSIVPPSPAPSHREGRGHDRSNKRLHLKDQ). The segment covering 327-346 (SHREGRGHDRSNKRLHLKDQ) has biased composition (basic and acidic residues). The chain crosses the membrane as a helical span at residues 468–488 (LFLSRLVVLTVMGIMMATMFM). Residues 489 to 502 (HPKKNLQGITNRLS) are Extracellular-facing. A helical membrane pass occupies residues 503–523 (FFIFTVCLFFFSSNDAVPAFI). At 524 to 547 (QERFIFVRETSHNKYRASSYTIAG) the chain is on the cytoplasmic side. The chain crosses the membrane as a helical span at residues 548 to 568 (LITYLPFLAVQAAVYAVIVWF). The Extracellular segment spans residues 569 to 575 (ALSLRGP). Residues 576-596 (FIYFLIVLYMSLLSTNSFVVF) form a helical membrane-spanning segment. Topologically, residues 597 to 604 (VSSVVPNY) are cytoplasmic. The chain crosses the membrane as a helical span at residues 605–625 (ILGYAAVIAFTALFFLFCGYF). The Extracellular portion of the chain corresponds to 626 to 693 (LNSHDMPQYW…QVESKKWEKV (68 aa)). A glycan (N-linked (GlcNAc...) asparagine) is linked at asparagine 681. The helical transmembrane segment at 694–714 (YIMLAWAIVYRILFYIVLRFF) threads the bilayer. Topologically, residues 715-720 (SKNQRT) are cytoplasmic.

The protein belongs to the ABC transporter superfamily. ABCG family. Stunted arbuscule (STR) subfamily. As to quaternary structure, heterodimerizes with STR; the resulting transporter is located in the peri-arbuscular membrane.

It is found in the cell membrane. Its function is as follows. Together with STR, required for arbuscule development in arbuscular mycorrhizal (AM) symbiosis. The protein is ABC transporter G family member STR2 of Petunia hybrida (Petunia).